Here is a 398-residue protein sequence, read N- to C-terminus: Yellow-related salivary protein SP04 (398 aa).

An N-terminal signal peptide occupies residues 1–18 (MKWFLFLLSTIFVQGILG). Residues 73 to 94 (TLTEIERKKHPERSPPLSKFSG) form a disordered region. A compositionally biased stretch (basic and acidic residues) spans 75–85 (TEIERKKHPER).

This sequence belongs to the major royal jelly protein family. As to expression, female salivary gland (at protein level).

It localises to the secreted. Probably modulates blood feeding of sand flies on vertebrate species by binding and sequestering different mediators involved in the host response. Binds biogenic amines. Binds serotonin with high affinity. Binds histamine with low affinity. In Phlebotomus argentipes (Phlebotomine sand fly), this protein is Yellow-related salivary protein SP04.